Reading from the N-terminus, the 148-residue chain is UPF0756 membrane protein KPN78578_11500 (148 aa).

Helical transmembrane passes span 14–34, 51–71, 86–106, and 121–141; these read ALGF…LIIV, LTVG…SGTL, LLAI…VSLM, and VLGV…AGII.

It belongs to the UPF0756 family.

It localises to the cell membrane. In Klebsiella pneumoniae subsp. pneumoniae (strain ATCC 700721 / MGH 78578), this protein is UPF0756 membrane protein KPN78578_11500.